We begin with the raw amino-acid sequence, 432 residues long: Serine--tRNA ligase (432 aa).

Thr-238–Glu-240 serves as a coordination point for L-serine. Arg-269–Glu-271 provides a ligand contact to ATP. An L-serine-binding site is contributed by Glu-292. Position 356 to 359 (Glu-356 to Ser-359) interacts with ATP. Ser-392 contacts L-serine.

This sequence belongs to the class-II aminoacyl-tRNA synthetase family. Type-1 seryl-tRNA synthetase subfamily. In terms of assembly, homodimer. The tRNA molecule binds across the dimer.

The protein resides in the cytoplasm. The enzyme catalyses tRNA(Ser) + L-serine + ATP = L-seryl-tRNA(Ser) + AMP + diphosphate + H(+). It carries out the reaction tRNA(Sec) + L-serine + ATP = L-seryl-tRNA(Sec) + AMP + diphosphate + H(+). Its pathway is aminoacyl-tRNA biosynthesis; selenocysteinyl-tRNA(Sec) biosynthesis; L-seryl-tRNA(Sec) from L-serine and tRNA(Sec): step 1/1. Its function is as follows. Catalyzes the attachment of serine to tRNA(Ser). Is also able to aminoacylate tRNA(Sec) with serine, to form the misacylated tRNA L-seryl-tRNA(Sec), which will be further converted into selenocysteinyl-tRNA(Sec). This Buchnera aphidicola subsp. Baizongia pistaciae (strain Bp) protein is Serine--tRNA ligase.